A 784-amino-acid chain; its full sequence is Alpha-catulin (784 aa).

Residues 35-247 (IKTKSIEQTL…LLLTASKTYL (213 aa)) are vinculin/alpha-catenin homology 1 (VH1) region. Positions 387-414 (ASGLEVTVERLNRRLKDLSKQLQIVAME) form a coiled coil. The tract at residues 552–696 (PRPGKHGTTQ…MVKSPTVGKT (145 aa)) is vinculin/alpha-catenin homology 2 (VH2) region. The segment at 737–784 (GSVNGRTGADGERTSRESTVWRRTPSIRRAAPPTSSHLSANNSSSIHI) is disordered. Basic and acidic residues predominate over residues 745-756 (ADGERTSRESTV). The span at 771–784 (SSHLSANNSSSIHI) shows a compositional bias: low complexity.

It belongs to the vinculin/alpha-catenin family. Interacts with slo-1 (via C-terminus); the interaction is required for localization of slo-1 to dense bodies in body wall muscle cells. Interacts (via N-terminus) with dystrophin complex member dyb-1 (via C-terminus); the interaction is required for localization of the dystrophin complex and ctn-1 near dense bodies in muscle cells. As to expression, expressed in body wall muscles, vulval muscles, stomatointestinal cells and pharyngeal muscle cells. Expressed in enteric muscles, nerve ring neurons and in the ventral nerve cord.

The protein resides in the cytoplasm. Its function is as follows. Required for slo-1 potassium ion channel clustering at presynaptic terminals and in egg-laying muscles; clustering of slo-1 mediates the intoxicating and sedatory effects of ethanol on worms. Required for slo-1 localization to dense bodies in body wall muscle cells. Maintains the localization of the dystrophin complex near muscle cell dense bodies via its interaction with complex member dyb-1 which is required for slo-1 localization in muscle while slo-1 localization in neurons is independent of the dystrophin complex. This chain is Alpha-catulin, found in Caenorhabditis elegans.